Consider the following 35-residue polypeptide: Coenzyme PQQ synthesis protein A (35 aa).

Positions 16–20 (EINMY) form a cross-link, pyrroloquinoline quinone (Glu-Tyr).

Belongs to the PqqA family.

It functions in the pathway cofactor biosynthesis; pyrroloquinoline quinone biosynthesis. Its function is as follows. Required for coenzyme pyrroloquinoline quinone (PQQ) biosynthesis. PQQ is probably formed by cross-linking a specific glutamate to a specific tyrosine residue and excising these residues from the peptide. This chain is Coenzyme PQQ synthesis protein A, found in Ruegeria pomeroyi (strain ATCC 700808 / DSM 15171 / DSS-3) (Silicibacter pomeroyi).